We begin with the raw amino-acid sequence, 75 residues long: DNA-directed RNA polymerase subunit omega (75 aa).

It belongs to the RNA polymerase subunit omega family. In terms of assembly, the RNAP catalytic core consists of 2 alpha, 1 beta, 1 beta' and 1 omega subunit. When a sigma factor is associated with the core the holoenzyme is formed, which can initiate transcription.

The catalysed reaction is RNA(n) + a ribonucleoside 5'-triphosphate = RNA(n+1) + diphosphate. In terms of biological role, promotes RNA polymerase assembly. Latches the N- and C-terminal regions of the beta' subunit thereby facilitating its interaction with the beta and alpha subunits. The polypeptide is DNA-directed RNA polymerase subunit omega (Lysinibacillus sphaericus (strain C3-41)).